Here is a 356-residue protein sequence, read N- to C-terminus: S-adenosylmethionine:tRNA ribosyltransferase-isomerase (356 aa).

It belongs to the QueA family. Monomer.

The protein resides in the cytoplasm. It carries out the reaction 7-aminomethyl-7-carbaguanosine(34) in tRNA + S-adenosyl-L-methionine = epoxyqueuosine(34) in tRNA + adenine + L-methionine + 2 H(+). It functions in the pathway tRNA modification; tRNA-queuosine biosynthesis. In terms of biological role, transfers and isomerizes the ribose moiety from AdoMet to the 7-aminomethyl group of 7-deazaguanine (preQ1-tRNA) to give epoxyqueuosine (oQ-tRNA). The sequence is that of S-adenosylmethionine:tRNA ribosyltransferase-isomerase from Escherichia coli O127:H6 (strain E2348/69 / EPEC).